Consider the following 184-residue polypeptide: NADH-quinone oxidoreductase subunit B (184 aa).

[4Fe-4S] cluster is bound by residues Cys-63, Cys-64, Cys-128, and Cys-158.

Belongs to the complex I 20 kDa subunit family. In terms of assembly, NDH-1 is composed of 14 different subunits. Subunits NuoB, C, D, E, F, and G constitute the peripheral sector of the complex. Requires [4Fe-4S] cluster as cofactor.

The protein localises to the cell inner membrane. The enzyme catalyses a quinone + NADH + 5 H(+)(in) = a quinol + NAD(+) + 4 H(+)(out). NDH-1 shuttles electrons from NADH, via FMN and iron-sulfur (Fe-S) centers, to quinones in the respiratory chain. Couples the redox reaction to proton translocation (for every two electrons transferred, four hydrogen ions are translocated across the cytoplasmic membrane), and thus conserves the redox energy in a proton gradient. The sequence is that of NADH-quinone oxidoreductase subunit B from Xylella fastidiosa (strain 9a5c).